The sequence spans 358 residues: Phosphoserine aminotransferase (358 aa).

Arg-41 provides a ligand contact to L-glutamate. Residues 75-76 (AS), Trp-100, Thr-148, Asp-167, and Gln-190 contribute to the pyridoxal 5'-phosphate site. An N6-(pyridoxal phosphate)lysine modification is found at Lys-191. Residue 233–234 (NT) participates in pyridoxal 5'-phosphate binding.

Belongs to the class-V pyridoxal-phosphate-dependent aminotransferase family. SerC subfamily. As to quaternary structure, homodimer. The cofactor is pyridoxal 5'-phosphate.

The protein resides in the cytoplasm. The enzyme catalyses O-phospho-L-serine + 2-oxoglutarate = 3-phosphooxypyruvate + L-glutamate. It catalyses the reaction 4-(phosphooxy)-L-threonine + 2-oxoglutarate = (R)-3-hydroxy-2-oxo-4-phosphooxybutanoate + L-glutamate. The protein operates within amino-acid biosynthesis; L-serine biosynthesis; L-serine from 3-phospho-D-glycerate: step 2/3. It participates in cofactor biosynthesis; pyridoxine 5'-phosphate biosynthesis; pyridoxine 5'-phosphate from D-erythrose 4-phosphate: step 3/5. In terms of biological role, catalyzes the reversible conversion of 3-phosphohydroxypyruvate to phosphoserine and of 3-hydroxy-2-oxo-4-phosphonooxybutanoate to phosphohydroxythreonine. In Campylobacter jejuni subsp. doylei (strain ATCC BAA-1458 / RM4099 / 269.97), this protein is Phosphoserine aminotransferase.